The following is a 30-amino-acid chain: Cyclotide hyen-F (30 aa).

A cross-link (cyclopeptide (Gly-Asn)) is located at residues 1 to 30 (GLPCGESCVYIPCISTVLGCSCSNKVCYRN). 3 disulfide bridges follow: C4/C20, C8/C22, and C13/C27.

Post-translationally, this is a cyclic peptide. Detected in seeds (at protein level).

Its function is as follows. Probably participates in a plant defense mechanism. The polypeptide is Cyclotide hyen-F (Pigea enneasperma (Spade flower)).